Reading from the N-terminus, the 241-residue chain is Pyridoxine 5'-phosphate synthase (241 aa).

Residue asparagine 7 coordinates 3-amino-2-oxopropyl phosphate. A 1-deoxy-D-xylulose 5-phosphate-binding site is contributed by 9 to 10 (DH). Arginine 18 is a binding site for 3-amino-2-oxopropyl phosphate. The active-site Proton acceptor is the histidine 43. The 1-deoxy-D-xylulose 5-phosphate site is built by arginine 45 and histidine 50. Glutamate 70 functions as the Proton acceptor in the catalytic mechanism. Residue threonine 100 coordinates 1-deoxy-D-xylulose 5-phosphate. Catalysis depends on histidine 191, which acts as the Proton donor. 3-amino-2-oxopropyl phosphate contacts are provided by residues serine 192 and 213 to 214 (GH).

Belongs to the PNP synthase family. Homooctamer; tetramer of dimers.

The protein localises to the cytoplasm. The enzyme catalyses 3-amino-2-oxopropyl phosphate + 1-deoxy-D-xylulose 5-phosphate = pyridoxine 5'-phosphate + phosphate + 2 H2O + H(+). The protein operates within cofactor biosynthesis; pyridoxine 5'-phosphate biosynthesis; pyridoxine 5'-phosphate from D-erythrose 4-phosphate: step 5/5. In terms of biological role, catalyzes the complicated ring closure reaction between the two acyclic compounds 1-deoxy-D-xylulose-5-phosphate (DXP) and 3-amino-2-oxopropyl phosphate (1-amino-acetone-3-phosphate or AAP) to form pyridoxine 5'-phosphate (PNP) and inorganic phosphate. The chain is Pyridoxine 5'-phosphate synthase from Nitrosomonas eutropha (strain DSM 101675 / C91 / Nm57).